A 156-amino-acid chain; its full sequence is Cyanate hydratase (156 aa).

Residues Arg-96, Glu-99, and Ser-122 contribute to the active site.

Belongs to the cyanase family.

The catalysed reaction is cyanate + hydrogencarbonate + 3 H(+) = NH4(+) + 2 CO2. In terms of biological role, catalyzes the reaction of cyanate with bicarbonate to produce ammonia and carbon dioxide. The chain is Cyanate hydratase from Pseudomonas aeruginosa (strain LESB58).